The chain runs to 149 residues: Large ribosomal subunit protein bL9 (149 aa).

This sequence belongs to the bacterial ribosomal protein bL9 family.

Binds to the 23S rRNA. The polypeptide is Large ribosomal subunit protein bL9 (Rubrobacter xylanophilus (strain DSM 9941 / JCM 11954 / NBRC 16129 / PRD-1)).